Consider the following 711-residue polypeptide: MAVYRLCVTTGSYLKAGTLDNIYATLVGTCGESPKQKLDRVGRDFASGSVQKYKVRCEAELGEILLLRLHKERFAFFCKDPWYCSRICVTAPDGSAVHFPCYQWIDGYCTVELRPGTARTICQDSLPLLLDHRKRELQARQECYRWKIFAPGFPRMVDVSSFQEMESDKKFALTKTVPCAEQDDNSGNRYLPGFPMKIDIPSLLHMEPNIRYSATKTASLIFNALPASFGMKIRGLLDRKGSWKRLDDIRNIFWCHKTFTSEYVTEHWCEDSFFGYQYLNGVNPVMLHCLSSLPSKLPVTNDMVAPLLGPGTCLQTELERGHIFLADYWILAEAPVHCINGLQQYVTAPLCLLWLNPQGVLLPLAIQLSQTPGPESPIFLPTDCELDWLLAKTWVRNSEFLVHENNTHFLCTHLLCEAFSMATLRQLPLCHPVYKLLLPHTRYTLQVNTIARATLLNPDGLVDKVTSIGRQGLIYLMSTGLAHFTYTDFCLPDSIRARGVLTIPNYHYRDDGLKIWAAIERFVSEIVSYYYPSDASVQQDCELQAWVGEIFAQAFLGRESSGFPSRLCTPGELVKYLTAIIFNCSAQHAAVNSGQHDFGAWMPNAPSSMRQPPPQTKGDTTMKSYLDTLPEVNTTCRNLLLFWLVSQEPKDQRPLGTYPDEHFTEEAPRQSIAAFQNCLAQISKDIRERNQSLALPYAYLDPPLIENSVSI.

One can recognise a PLAT domain in the interval 2-119; it reads AVYRLCVTTG…TVELRPGTAR (118 aa). Residues 120–711 form the Lipoxygenase domain; sequence TICQDSLPLL…PPLIENSVSI (592 aa). His408, His413, His588, Asn592, and Ile711 together coordinate Fe cation.

This sequence belongs to the lipoxygenase family. The cofactor is Fe cation. In terms of tissue distribution, skin specific.

Its subcellular location is the cytoplasm. It catalyses the reaction a hydroperoxyeicosatetraenoate = a hydroxy-epoxy-eicosatetraenoate. The enzyme catalyses (8S)-hydroperoxy-(5Z,9E,11Z,14Z)-eicosatetraenoate = (10R)-hydroxy-(8S,9S)-epoxy-(5Z,11Z,14Z)-eicosatrienoate. It carries out the reaction (12R)-hydroperoxy-(5Z,8Z,10E,14Z)-eicosatetraenoate = (8R)-hydroxy-(11R,12R)-epoxy-(5Z,9E,14Z)-eicosatrienoate. The catalysed reaction is (12S)-hydroperoxy-(5Z,8Z,10E,14Z)-eicosatetraenoate = (8R)-hydroxy-(11S,12S)-epoxy-(5Z,9E,14Z)-eicosatrienoate. It catalyses the reaction (12S)-hydroperoxy-(5Z,8Z,10E,14Z)-eicosatetraenoate = (10R)-hydroxy-(11S,12S)-epoxy-(5Z,8Z,14Z)-eicosatrienoate. The enzyme catalyses (15S)-hydroperoxy-(5Z,8Z,11Z,13E)-eicosatetraenoate = (13R)-hydroxy-(14S,15S)-epoxy-(5Z,8Z,11Z)-eicosatrienoate. It carries out the reaction (13S)-hydroperoxy-(9Z,11E)-octadecadienoate = 11-hydroxy-(12S,13S)-epoxy-(9Z)-octadecenoate. The catalysed reaction is (5S)-hydroperoxy-(6E,8Z,11Z,14Z)-eicosatetraenoate = 7R-hydroxy-5S,6S-epoxy-(8Z,11Z,14Z)-eicosatrienoate. It catalyses the reaction N-[omega-(9R)-hydroperoxy-(10E,12Z)-octadecadienoyloxy]acyl-beta-D-glucosyl-(1&lt;-&gt;1)-octadecasphing-4E-enine = a N-[omega-(9R,10R)-epoxy-(13R)-hydroxy-(11E)-octadecenoyloxy]acyl-beta-D-glucosyl-(1&lt;-&gt;1)-sphing-4E-enine. The enzyme catalyses a N-[omega-(9R)-hydroperoxy-(10E,12Z)-octadecadienoyloxy]-acylsphin-4E-enine = a N-[omega-(9R,10R)-epoxy-(13R)-hydroxy-(11E)-octadecenoyloxy]-acylsphing-4E-enine. It carries out the reaction a hydroperoxyeicosatetraenoate = an oxoeicosatetraenoate + H2O. The catalysed reaction is (8R)-hydroperoxy-(5Z,9E,11Z,14Z)-eicosatetraenoate = 8-oxo-(5Z,9E,11Z,14Z)-eicosatetraenoate + H2O. It catalyses the reaction (8S)-hydroperoxy-(5Z,9E,11Z,14Z)-eicosatetraenoate = 8-oxo-(5Z,9E,11Z,14Z)-eicosatetraenoate + H2O. The enzyme catalyses (12R)-hydroperoxy-(5Z,8Z,10E,14Z)-eicosatetraenoate = 12-oxo-(5Z,8Z,10E,14Z)-eicosatetraenoate + H2O. It carries out the reaction (12S)-hydroperoxy-(5Z,8Z,10E,14Z)-eicosatetraenoate = 12-oxo-(5Z,8Z,10E,14Z)-eicosatetraenoate + H2O. The catalysed reaction is (15S)-hydroperoxy-(5Z,8Z,11Z,13E)-eicosatetraenoate = 15-oxo-(5Z,8Z,11Z,13E)-eicosatetraenoate + H2O. It catalyses the reaction (13S)-hydroperoxy-(9Z,11E)-octadecadienoate = 13-oxo-(9Z,11E)-octadecadienoate + H2O. Its pathway is lipid metabolism; hydroperoxy eicosatetraenoic acid biosynthesis. It functions in the pathway lipid metabolism; sphingolipid metabolism. Non-heme iron-containing lipoxygenase which is atypical in that it displays a prominent hydroperoxide isomerase activity and a reduced lipoxygenases activity. The hydroperoxide isomerase activity catalyzes the isomerization of hydroperoxides, derived from arachidonic and linoleic acid by ALOX12B, into hepoxilin-type epoxyalcohols and ketones. In presence of oxygen, oxygenates polyunsaturated fatty acids, including arachidonic acid, to produce fatty acid hydroperoxides. In the skin, acts downstream of ALOX12B on the linoleate moiety of esterified omega-hydroxyacyl-sphingosine (EOS) ceramides to produce an epoxy-ketone derivative, a crucial step in the conjugation of omega-hydroxyceramide to membrane proteins. Therefore plays a crucial role in the synthesis of corneocytes lipid envelope and the establishment of the skin barrier to water loss. In parallel, it may have a signaling function in barrier formation through the production of hepoxilins metabolites. Also plays a role in adipocyte differentiation through hepoxilin A3 and hepoxilin B3 production which in turn activate PPARG. Through the production of hepoxilins in the spinal cord, it may regulate inflammatory tactile allodynia. The protein is Hydroperoxide isomerase ALOXE3 of Mus musculus (Mouse).